The chain runs to 179 residues: Putative DUP240 protein DFP1 (179 aa).

The next 2 membrane-spanning stretches (helical) occupy residues 4–24 and 26–46; these read FLLF…SGVL and PAMV…IWSF.

Belongs to the DUP/COS family.

It localises to the membrane. This Saccharomyces cerevisiae (strain ATCC 204508 / S288c) (Baker's yeast) protein is Putative DUP240 protein DFP1.